We begin with the raw amino-acid sequence, 338 residues long: Lipoate-protein ligase A (338 aa).

Residues 29 to 216 (PATQRVLFLW…AFFAHYGERV (188 aa)) form the BPL/LPL catalytic domain. ATP-binding positions include Arg-71, 76–79 (GAVF), and Lys-134. Lys-134 contributes to the (R)-lipoate binding site.

The protein belongs to the LplA family. In terms of assembly, monomer.

It is found in the cytoplasm. The enzyme catalyses L-lysyl-[lipoyl-carrier protein] + (R)-lipoate + ATP = N(6)-[(R)-lipoyl]-L-lysyl-[lipoyl-carrier protein] + AMP + diphosphate + H(+). Its pathway is protein modification; protein lipoylation via exogenous pathway; protein N(6)-(lipoyl)lysine from lipoate: step 1/2. It functions in the pathway protein modification; protein lipoylation via exogenous pathway; protein N(6)-(lipoyl)lysine from lipoate: step 2/2. Functionally, catalyzes both the ATP-dependent activation of exogenously supplied lipoate to lipoyl-AMP and the transfer of the activated lipoyl onto the lipoyl domains of lipoate-dependent enzymes. This is Lipoate-protein ligase A from Salmonella dublin (strain CT_02021853).